The primary structure comprises 394 residues: NAD(P)H-quinone oxidoreductase subunit H (394 aa).

Belongs to the complex I 49 kDa subunit family. NDH-1 can be composed of about 15 different subunits; different subcomplexes with different compositions have been identified which probably have different functions.

It localises to the cellular thylakoid membrane. The catalysed reaction is a plastoquinone + NADH + (n+1) H(+)(in) = a plastoquinol + NAD(+) + n H(+)(out). It carries out the reaction a plastoquinone + NADPH + (n+1) H(+)(in) = a plastoquinol + NADP(+) + n H(+)(out). NDH-1 shuttles electrons from an unknown electron donor, via FMN and iron-sulfur (Fe-S) centers, to quinones in the respiratory and/or the photosynthetic chain. The immediate electron acceptor for the enzyme in this species is believed to be plastoquinone. Couples the redox reaction to proton translocation, and thus conserves the redox energy in a proton gradient. Cyanobacterial NDH-1 also plays a role in inorganic carbon-concentration. The polypeptide is NAD(P)H-quinone oxidoreductase subunit H (Trichormus variabilis (strain ATCC 29413 / PCC 7937) (Anabaena variabilis)).